The chain runs to 908 residues: NADH-quinone oxidoreductase subunit G (908 aa).

Residues 2-83 (ATIHVDGKEY…GTFISIDDEE (82 aa)) form the 2Fe-2S ferredoxin-type domain. Residues Cys-34, Cys-45, Cys-48, and Cys-67 each contribute to the [2Fe-2S] cluster site. Residues 83 to 122 (EAKQFRESVVEWLMTNHPHDCPVCEEGGNCHLQDMTVMTG) form the 4Fe-4S His(Cys)3-ligated-type domain. 12 residues coordinate [4Fe-4S] cluster: His-99, Cys-103, Cys-106, Cys-112, Cys-151, Cys-154, Cys-157, Cys-201, Cys-228, Cys-231, Cys-235, and Cys-263. The 4Fe-4S Mo/W bis-MGD-type domain occupies 221-277 (MQFAPSICQQCSIGCNISPGERYGELRRIENRYNGTVNHYFLCDRGRFGYGYVNLKD).

It belongs to the complex I 75 kDa subunit family. As to quaternary structure, composed of 13 different subunits. Subunits NuoCD, E, F, and G constitute the peripheral sector of the complex. It depends on [2Fe-2S] cluster as a cofactor. Requires [4Fe-4S] cluster as cofactor.

The protein localises to the cytoplasm. Its subcellular location is the cell inner membrane. The enzyme catalyses a quinone + NADH + 5 H(+)(in) = a quinol + NAD(+) + 4 H(+)(out). In terms of biological role, NDH-1 shuttles electrons from NADH, via FMN and iron-sulfur (Fe-S) centers, to quinones in the respiratory chain. The immediate electron acceptor for the enzyme in this species is believed to be ubiquinone. Couples the redox reaction to proton translocation (for every two electrons transferred, four hydrogen ions are translocated across the cytoplasmic membrane), and thus conserves the redox energy in a proton gradient. The polypeptide is NADH-quinone oxidoreductase subunit G (nuoG) (Escherichia coli (strain K12)).